The sequence spans 1128 residues: Lysylphosphatidylglycerol biosynthesis bifunctional protein LysX (1128 aa).

The segment at 1 to 47 (MDNPPPTGVAPRHLPPGSVHTGKVTASLSHRRPDSVQDAPPAPVPHR) is disordered. Positions 1–632 (MDNPPPTGVA…GLHADGSPPD (632 aa)) are phosphatidylglycerol lysyltransferase. The next 6 helical transmembrane spans lie at 55–75 (VPHIAGLVLGVFAVACLLWSL), 97–117 (APDTNVMWALIVGLLAGAIAS), 121–141 (IAWWLLVGYLTLFAVANGLRF), 147–167 (INALVAMIVQVGVVGLLIAAW), 184–204 (GVLVGGLAIGCLLGWGLVEVF), and 240–260 (FVNVLLGLFGAIALLAAVLTL). Positions 619–644 (DTLTGLHADGSPPDWPKPDLLDSGPR) are disordered. The segment at 633-1128 (WPKPDLLDSG…TLPFPLVKPR (496 aa)) is lysine--tRNA ligase. Basic and acidic residues predominate over residues 634-644 (PKPDLLDSGPR). Mg(2+)-binding residues include aspartate 1040 and glutamate 1047.

It in the N-terminal section; belongs to the LPG synthetase family. The protein in the C-terminal section; belongs to the class-II aminoacyl-tRNA synthetase family. Mg(2+) serves as cofactor.

The protein localises to the cell membrane. The enzyme catalyses tRNA(Lys) + L-lysine + ATP = L-lysyl-tRNA(Lys) + AMP + diphosphate. It carries out the reaction L-lysyl-tRNA(Lys) + a 1,2-diacyl-sn-glycero-3-phospho-(1'-sn-glycerol) = a 1,2-diacyl-sn-glycero-3-phospho-1'-(3'-O-L-lysyl)-sn-glycerol + tRNA(Lys). Functionally, catalyzes the production of L-lysyl-tRNA(Lys)transfer and the transfer of a lysyl group from L-lysyl-tRNA(Lys) to membrane-bound phosphatidylglycerol (PG), which produces lysylphosphatidylglycerol (LPG), one of the components of the bacterial membrane with a positive net charge. LPG synthesis contributes to the resistance to cationic antimicrobial peptides (CAMPs) and likely protects M.tuberculosis against the CAMPs produced by competiting microorganisms (bacteriocins). In fact, the modification of anionic phosphatidylglycerol with positively charged L-lysine results in repulsion of the peptides. The protein is Lysylphosphatidylglycerol biosynthesis bifunctional protein LysX (lysX) of Nocardia farcinica (strain IFM 10152).